Here is a 120-residue protein sequence, read N- to C-terminus: Crustacean hyperglycemic hormones 1 (120 aa).

Residues 1–27 (MTAFRMVWSMLLASLLMLLVASSTAPA) form the signal peptide. Cystine bridges form between cysteine 53-cysteine 89, cysteine 69-cysteine 85, and cysteine 72-cysteine 98. The residue at position 118 (valine 118) is a Valine amide.

It belongs to the arthropod CHH/MIH/GIH/VIH hormone family.

Its subcellular location is the secreted. Hormone found in the sinus gland of isopods and decapods which controls the blood sugar level. Has a secretagogue action over the amylase released from the midgut gland. May act as a stress hormone and may be involved in the control of molting and reproduction. This chain is Crustacean hyperglycemic hormones 1 (CHH1), found in Penaeus monodon (Giant tiger prawn).